The sequence spans 450 residues: Sorting nexin-4 (450 aa).

Methionine 1 is modified (N-acetylmethionine). The tract at residues 1–46 (MEQAPPDPERQLQPAPLEPLGSPDAGLGAAVGKEAEGAGEESSGVD) is disordered. Serine 22 is modified (phosphoserine). A PX domain is found at 61-187 (SVSEAEKRTG…YLFLTQEGNW (127 aa)). Arginine 106, serine 108, lysine 132, and arginine 154 together coordinate a 1,2-diacyl-sn-glycero-3-phospho-(1D-myo-inositol-3-phosphate).

This sequence belongs to the sorting nexin family. As to quaternary structure, heterodimer; heterodimerizes with SNX7 or SNX30. Interacts with WWC1/KIBRA. Identified in a complex with WWC1/KIBRA and dynein components DYNLL1 and DYNC1I2. Interacts with BIN1.

It localises to the early endosome membrane. In terms of biological role, involved in the regulation of endocytosis and in several stages of intracellular trafficking. Plays a role in recycling endocytosed transferrin receptor and prevent its degradation. Involved in autophagosome assembly by regulating trafficking and recycling of phospholipid scramblase ATG9A. The sequence is that of Sorting nexin-4 from Homo sapiens (Human).